Consider the following 115-residue polypeptide: Superoxide reductase (115 aa).

6 residues coordinate Fe cation: Glu14, His16, His41, His47, Cys102, and His105.

The protein belongs to the desulfoferrodoxin family. Homotetramer. Requires Fe cation as cofactor.

The catalysed reaction is reduced [rubredoxin] + superoxide + 2 H(+) = oxidized [rubredoxin] + H2O2. Uses electrons from reduced NADP, by way of rubredoxin and an oxidoreductase, to catalyze the reduction of superoxide to hydrogen peroxide. The protein is Superoxide reductase (sorA) of Pyrococcus abyssi (strain GE5 / Orsay).